A 333-amino-acid polypeptide reads, in one-letter code: Phosphoribosylformylglycinamidine cyclo-ligase (333 aa).

This sequence belongs to the AIR synthase family.

Its subcellular location is the cytoplasm. The catalysed reaction is 2-formamido-N(1)-(5-O-phospho-beta-D-ribosyl)acetamidine + ATP = 5-amino-1-(5-phospho-beta-D-ribosyl)imidazole + ADP + phosphate + H(+). The protein operates within purine metabolism; IMP biosynthesis via de novo pathway; 5-amino-1-(5-phospho-D-ribosyl)imidazole from N(2)-formyl-N(1)-(5-phospho-D-ribosyl)glycinamide: step 2/2. This chain is Phosphoribosylformylglycinamidine cyclo-ligase, found in Clostridium perfringens (strain ATCC 13124 / DSM 756 / JCM 1290 / NCIMB 6125 / NCTC 8237 / Type A).